Here is a 102-residue protein sequence, read N- to C-terminus: ATP-dependent Clp protease adapter protein ClpS (102 aa).

It belongs to the ClpS family. Binds to the N-terminal domain of the chaperone ClpA.

Functionally, involved in the modulation of the specificity of the ClpAP-mediated ATP-dependent protein degradation. The sequence is that of ATP-dependent Clp protease adapter protein ClpS from Shewanella loihica (strain ATCC BAA-1088 / PV-4).